Reading from the N-terminus, the 83-residue chain is uncharacterized protein (83 aa).

A helical membrane pass occupies residues 58 to 78 (AVLLWIAIIATLGNIVVVGVV).

It is found in the membrane. This is an uncharacterized protein from Homo sapiens (Human).